A 797-amino-acid chain; its full sequence is uncharacterized protein (797 aa).

This is an uncharacterized protein from Treponema pallidum (strain Nichols).